The primary structure comprises 142 residues: Large ribosomal subunit protein uL22c (142 aa).

The protein belongs to the universal ribosomal protein uL22 family. As to quaternary structure, part of the 50S ribosomal subunit.

The protein localises to the plastid. It localises to the chloroplast. Its function is as follows. This protein binds specifically to 23S rRNA. The globular domain of the protein is located near the polypeptide exit tunnel on the outside of the subunit, while an extended beta-hairpin is found that lines the wall of the exit tunnel in the center of the 70S ribosome. The protein is Large ribosomal subunit protein uL22c (rpl22) of Ceratophyllum demersum (Rigid hornwort).